A 204-amino-acid polypeptide reads, in one-letter code: UPF0637 protein Lm4b_01081 (204 aa).

The protein belongs to the UPF0637 family.

The polypeptide is UPF0637 protein Lm4b_01081 (Listeria monocytogenes serotype 4b (strain CLIP80459)).